The chain runs to 451 residues: D-ribitol-5-phosphate cytidylyltransferase (451 aa).

Residues Met-1–Ser-29 are disordered.

Belongs to the IspD/TarI cytidylyltransferase family. IspD subfamily. In terms of assembly, homodimer. As to expression, ubiquitously expressed, with high expression in brain.

The protein localises to the cytoplasm. It localises to the cytosol. The catalysed reaction is D-ribitol 5-phosphate + CTP + H(+) = CDP-L-ribitol + diphosphate. The enzyme catalyses D-ribose 5-phosphate + CTP + H(+) = CDP-D-ribose + diphosphate. It catalyses the reaction D-ribulose 5-phosphate + CTP + H(+) = CDP-D-ribulose + diphosphate. The protein operates within protein modification; protein glycosylation. Functionally, cytidylyltransferase required for protein O-linked mannosylation. Catalyzes the formation of CDP-ribitol nucleotide sugar from D-ribitol 5-phosphate. CDP-ribitol is a substrate of FKTN during the biosynthesis of the phosphorylated O-mannosyl trisaccharide (N-acetylgalactosamine-beta-3-N-acetylglucosamine-beta-4-(phosphate-6-)mannose), a carbohydrate structure present in alpha-dystroglycan (DAG1), which is required for binding laminin G-like domain-containing extracellular proteins with high affinity. Shows activity toward other pentose phosphate sugars and mediates formation of CDP-ribulose or CDP-ribose using CTP and ribulose-5-phosphate or ribose-5-phosphate, respectively. Not Involved in dolichol production. This chain is D-ribitol-5-phosphate cytidylyltransferase, found in Homo sapiens (Human).